We begin with the raw amino-acid sequence, 1000 residues long: MDEQISKAVEIALSGTSDLVLKNQAFEFINQIKSTEEGYKSCLDILLKSINSNSPLNQEFKFFILQVIDENITKLNNEQLYELNSDLFQYLNYVINSNINDPVYLKNKFAGIMGNLFCFTYLSINPTFLKDLLALIADNNLIAIDIYSRIIIAVHTEISDKFISRSREVQDRNNLLKDQIRTNDMNLLVDNWQKILRNPELIQHNNEVLNNFLKIIGYYINWMEITLFISNDFINIIFQYLNKPDQRNETCLTLIEVISKKMKPLNKLELISLLNLTSIINSINNDDDLEFMENIAKLSNQVGLELVIVLESSELELFDSINQQFLNLWPSIFKFLSHEYDDISQQIFPFIQQYLLTCKKFNQLASIELLSSLLNKIILKMKFDDDDDGTDDESTEQFNEVRLKLKTFQDTIAILKPELFLEAIPIVINESIFANVSDFDKVNWRNLELGLFELNTFTESLRNNLINLPKQEIGNSKPYVLVQEFLIKLINSDVVLKVDHPKIQLGFFELIVRHYNFLNTNINNQEVILRILELFSSPLGLFNNSEKVRLRTWYLFFRFVKLTKPTLNNSSFIENLFIKLQPLLVIKAELPTKDEDNDTVENGNFNNQLNLFESIGLLISLLSVDISLKVRMIDLIFQPLFNDLENCISNKDKVNQQLIALQAHHSLMAIGTFARGYDYDYNNKYSAEIVGKINNASQVVLITLENFAKFEIIRDAARFSFARFIPILNEEINNHLSKLVSIILAANNLKISELTNFLNFLGQIVHNFQSNDNIYKLLNDLLSPLLDKIFSLLKYNGENNEYESMPDIIRDKESLKKSYMNFISAIITNHSSSLLITETNKQKFPIILESFFVYAYNTSEPTVSKLAITQLINVVSVMGGHGGKINDPQDKYGESLPPLEGVDEYLMNKAVQLSFELPFQKSEFDLKDAQYRLVGQEIASLLKTYQEKRGDEYLTFLSNYLTNMGLSSELMTDFCTNLVKVDQRAFKKYFITFVTELKGK.

This sequence belongs to the exportin family.

It is found in the nucleus. Its subcellular location is the cytoplasm. Functionally, tRNA nucleus export receptor which facilitates tRNA translocation across the nuclear pore complex. Involved in pre-tRNA splicing, probably by affecting the interaction of pre-tRNA with splicing endonuclease. The protein is Exportin-T (LOS1) of Debaryomyces hansenii (strain ATCC 36239 / CBS 767 / BCRC 21394 / JCM 1990 / NBRC 0083 / IGC 2968) (Yeast).